We begin with the raw amino-acid sequence, 187 residues long: Protein GrpE (187 aa).

The protein belongs to the GrpE family. In terms of assembly, homodimer.

It is found in the cytoplasm. Its function is as follows. Participates actively in the response to hyperosmotic and heat shock by preventing the aggregation of stress-denatured proteins, in association with DnaK and GrpE. It is the nucleotide exchange factor for DnaK and may function as a thermosensor. Unfolded proteins bind initially to DnaJ; upon interaction with the DnaJ-bound protein, DnaK hydrolyzes its bound ATP, resulting in the formation of a stable complex. GrpE releases ADP from DnaK; ATP binding to DnaK triggers the release of the substrate protein, thus completing the reaction cycle. Several rounds of ATP-dependent interactions between DnaJ, DnaK and GrpE are required for fully efficient folding. This chain is Protein GrpE, found in Albidiferax ferrireducens (strain ATCC BAA-621 / DSM 15236 / T118) (Rhodoferax ferrireducens).